Consider the following 99-residue polypeptide: U1-theraphotoxin-Tal1a (99 aa).

The first 22 residues, 1–22, serve as a signal peptide directing secretion; that stretch reads MNTIQVIIFAVVLVLTVTVGQA. A propeptide spanning residues 23–57 is cleaved from the precursor; it reads DEDSAETSLLRKLKEAEASLFGQHLEESQHSREKR. Disulfide bonds link C58–C73, C65–C78, and C72–C93. S98 bears the Serine amide mark.

This sequence belongs to the neurotoxin 14 (magi-1) family. 08 (Ltx-4) subfamily. Expressed by the venom gland.

The protein localises to the secreted. Functionally, insecticidal toxin that shows strong lethal effects on American cockroaches (P.americana) and common mealbeetle (T.molitor). Possibly acts by blocking ion channel currents. Also shows significant analgesic effects in mice models of pain including abdominal writhing induced by acetic acid and formalin-induced paw licking tests. In addition, exerts marked inhibition of proliferation of some human tumor cell lines including C8166, Molt-4, A-549, BIU-87, T24, and Calu-6. The chain is U1-theraphotoxin-Tal1a from Tliltocatl albopilosus (Curlyhair tarantula).